The primary structure comprises 184 residues: Large ribosomal subunit protein uL22A (184 aa).

Residue Lys-46 forms a Glycyl lysine isopeptide (Lys-Gly) (interchain with G-Cter in ubiquitin) linkage. Phosphothreonine is present on Thr-70.

Belongs to the universal ribosomal protein uL22 family. As to quaternary structure, component of the large ribosomal subunit (LSU). Mature yeast ribosomes consist of a small (40S) and a large (60S) subunit. The 40S small subunit contains 1 molecule of ribosomal RNA (18S rRNA) and 33 different proteins (encoded by 57 genes). The large 60S subunit contains 3 rRNA molecules (25S, 5.8S and 5S rRNA) and 46 different proteins (encoded by 81 genes). uL22 is associated with the polypeptide exit tunnel.

The protein resides in the cytoplasm. Functionally, component of the ribosome, a large ribonucleoprotein complex responsible for the synthesis of proteins in the cell. The small ribosomal subunit (SSU) binds messenger RNAs (mRNAs) and translates the encoded message by selecting cognate aminoacyl-transfer RNA (tRNA) molecules. The large subunit (LSU) contains the ribosomal catalytic site termed the peptidyl transferase center (PTC), which catalyzes the formation of peptide bonds, thereby polymerizing the amino acids delivered by tRNAs into a polypeptide chain. The nascent polypeptides leave the ribosome through a tunnel in the LSU and interact with protein factors that function in enzymatic processing, targeting, and the membrane insertion of nascent chains at the exit of the ribosomal tunnel. The polypeptide is Large ribosomal subunit protein uL22A (Saccharomyces cerevisiae (strain ATCC 204508 / S288c) (Baker's yeast)).